The chain runs to 217 residues: THAP domain-containing protein 2 (217 aa).

The segment at methionine 1 to phenylalanine 80 adopts a THAP-type zinc-finger fold. Positions glutamate 122–tyrosine 125 match the HCFC1-binding motif (HBM) motif.

In Mus musculus (Mouse), this protein is THAP domain-containing protein 2 (Thap2).